Here is a 103-residue protein sequence, read N- to C-terminus: Large ribosomal subunit protein bL21 (103 aa).

This sequence belongs to the bacterial ribosomal protein bL21 family. Part of the 50S ribosomal subunit. Contacts protein L20.

Its function is as follows. This protein binds to 23S rRNA in the presence of protein L20. The sequence is that of Large ribosomal subunit protein bL21 from Colwellia psychrerythraea (strain 34H / ATCC BAA-681) (Vibrio psychroerythus).